A 397-amino-acid chain; its full sequence is Vacuolar protein sorting-associated protein 37A (397 aa).

A Phosphoserine modification is found at serine 18. The 90-residue stretch at 308–397 (KSTFEKKMQR…AMHSQFHAPL (90 aa)) folds into the VPS37 C-terminal domain.

This sequence belongs to the VPS37 family. As to quaternary structure, component of the ESCRT-I complex (endosomal sorting complex required for transport I) which consists of TSG101, VPS28, a VPS37 protein (VPS37A to -D) and MVB12A or MVB12B in a 1:1:1:1 stoichiometry. Interacts with TSG101, VPS28 and HGS. Component of an ESCRT-I complex (endosomal sorting complex required for transport I) which consists of TSG101, VPS28, VPS37A and UBAP1 in a 1:1:1:1 stoichiometry.

The protein resides in the late endosome membrane. Its subcellular location is the nucleus. Component of the ESCRT-I complex, a regulator of vesicular trafficking process. Required for the sorting of endocytic ubiquitinated cargos into multivesicular bodies. May be involved in cell growth and differentiation. The polypeptide is Vacuolar protein sorting-associated protein 37A (Vps37a) (Mus musculus (Mouse)).